The sequence spans 51 residues: UPF0181 protein VV2_0310 (51 aa).

The protein belongs to the UPF0181 family.

This is UPF0181 protein VV2_0310 from Vibrio vulnificus (strain CMCP6).